A 685-amino-acid polypeptide reads, in one-letter code: Sodium-dependent phosphate transporter 1-A (685 aa).

A run of 6 helical transmembrane segments spans residues 21 to 41 (IMAP…VLAF), 66 to 86 (ACIL…AKVS), 106 to 126 (LMAG…AASF), 162 to 182 (IVLS…LLFL), 207 to 227 (ACTI…LLGF), and 234 to 254 (GIIL…WFVV). Disordered regions lie at residues 438 to 458 (RNRD…HGAD) and 483 to 513 (EAEE…HDQD). The segment covering 483-496 (EAEEQEEGSVEDVE) has biased composition (acidic residues). Basic and acidic residues predominate over residues 497 to 513 (TDRKSSSSSLEERHDQD). 4 helical membrane passes run 517-537 (VSLL…FAHG), 565-585 (ATPI…LWVW), 606-626 (FSIE…GLPI), and 656-676 (IFLA…GIMA).

The protein belongs to the inorganic phosphate transporter (PiT) (TC 2.A.20) family.

Its subcellular location is the membrane. Functionally, sodium-phosphate symporter which plays a fundamental housekeeping role in phosphate transport. The polypeptide is Sodium-dependent phosphate transporter 1-A (slc20a1-a) (Xenopus laevis (African clawed frog)).